The following is a 92-amino-acid chain: Serine protease inhibitor I/II (92 aa).

The signal sequence occupies residues 1–19 (MKLALALCAAFLLVVLVQA). Pacifastin domains are found at residues 20-54 (EQEC…CPPH) and 57-92 (EVTC…CPQK). 6 cysteine pairs are disulfide-bonded: Cys-23/Cys-38, Cys-33/Cys-51, Cys-36/Cys-46, Cys-60/Cys-75, Cys-70/Cys-89, and Cys-73/Cys-84.

The protein belongs to the protease inhibitor I19 family. Expressed in hemolymph, ovaries, testes and fat body of adults but are absent in the gut. Also present in larval hemolymph and fat body.

The protein resides in the secreted. In terms of biological role, in vitro, is active against alpha-chymotrypsin and trypsin. Its function is as follows. In vitro, is active against alpha-chymotrypsin and pancreatic elastase. In Schistocerca gregaria (Desert locust), this protein is Serine protease inhibitor I/II.